The primary structure comprises 476 residues: Xylan O-acetyltransferase 4 (476 aa).

Residues 1-37 (MTKPQQQSPPSTTATTTTSPPPPPPSTPPPASSSSSS) are disordered. Topologically, residues 1–63 (MTKPQQQSPP…SLLSALRRSP (63 aa)) are cytoplasmic. Low complexity predominate over residues 8–18 (SPPSTTATTTT). Over residues 19–31 (SPPPPPPSTPPPA) the composition is skewed to pro residues. The chain crosses the membrane as a helical; Signal-anchor for type II membrane protein span at residues 64-80 (VTTLVAAFFLLALFMYG). The Lumenal segment spans residues 81–476 (EDVRTLAELS…PSPHPPLPPQ (396 aa)). Asn-103, Asn-128, and Asn-167 each carry an N-linked (GlcNAc...) asparagine glycan. 4 cysteine pairs are disulfide-bonded: Cys-117–Cys-168, Cys-139–Cys-204, Cys-148–Cys-444, and Cys-360–Cys-440. A GDS motif motif is present at residues 191–193 (GDS). The active-site Nucleophile is Ser-193. Asn-299 and Asn-369 each carry an N-linked (GlcNAc...) asparagine glycan. Catalysis depends on Asp-439, which acts as the Proton donor. The DXXH motif signature appears at 439–442 (DCIH). Residue His-442 is the Proton acceptor of the active site.

It belongs to the PC-esterase family. TBL subfamily. As to expression, highly expressed in leaves. Expressed in roots, stems and inflorescences.

The protein resides in the golgi apparatus membrane. Xylan acetyltransferase required for 2-O- and 3-O-monoacetylation of xylosyl residues in xylan. Catalyzes the 2-O-acetylation of xylan, followed by nonenzymatic acetyl migration to the O-3 position, resulting in products that are monoacetylated at both O-2 and O-3 positions. This Oryza sativa subsp. japonica (Rice) protein is Xylan O-acetyltransferase 4.